The chain runs to 191 residues: Small ribosomal subunit protein uS5 (191 aa).

Residues 1–20 (MAAERERGGRERSRDREERD) are disordered. One can recognise an S5 DRBM domain in the interval 23–86 (FVDKLVHINR…EAAKRNLTRV (64 aa)).

It belongs to the universal ribosomal protein uS5 family. In terms of assembly, part of the 30S ribosomal subunit. Contacts proteins S4 and S8.

In terms of biological role, with S4 and S12 plays an important role in translational accuracy. Its function is as follows. Located at the back of the 30S subunit body where it stabilizes the conformation of the head with respect to the body. The chain is Small ribosomal subunit protein uS5 from Rhodopseudomonas palustris (strain HaA2).